Reading from the N-terminus, the 194-residue chain is Ribonuclease HII (194 aa).

Residues 1 to 194 (MTVGVDEVGR…RLFPRDDGLR (194 aa)) form the RNase H type-2 domain. A divalent metal cation-binding residues include aspartate 6, glutamate 7, and aspartate 102.

This sequence belongs to the RNase HII family. Mn(2+) is required as a cofactor. Mg(2+) serves as cofactor.

It is found in the cytoplasm. It catalyses the reaction Endonucleolytic cleavage to 5'-phosphomonoester.. Its function is as follows. Endonuclease that specifically degrades the RNA of RNA-DNA hybrids. This is Ribonuclease HII from Synechococcus sp. (strain WH7803).